The following is a 359-amino-acid chain: Histidinol-phosphate aminotransferase (359 aa).

Lys217 is modified (N6-(pyridoxal phosphate)lysine).

This sequence belongs to the class-II pyridoxal-phosphate-dependent aminotransferase family. Histidinol-phosphate aminotransferase subfamily. In terms of assembly, homodimer. The cofactor is pyridoxal 5'-phosphate.

The catalysed reaction is L-histidinol phosphate + 2-oxoglutarate = 3-(imidazol-4-yl)-2-oxopropyl phosphate + L-glutamate. It functions in the pathway amino-acid biosynthesis; L-histidine biosynthesis; L-histidine from 5-phospho-alpha-D-ribose 1-diphosphate: step 7/9. This chain is Histidinol-phosphate aminotransferase, found in Salmonella choleraesuis (strain SC-B67).